Consider the following 166-residue polypeptide: Large ribosomal subunit protein uL10 (166 aa).

The protein belongs to the universal ribosomal protein uL10 family. Part of the ribosomal stalk of the 50S ribosomal subunit. The N-terminus interacts with L11 and the large rRNA to form the base of the stalk. The C-terminus forms an elongated spine to which L12 dimers bind in a sequential fashion forming a multimeric L10(L12)X complex.

Its function is as follows. Forms part of the ribosomal stalk, playing a central role in the interaction of the ribosome with GTP-bound translation factors. The polypeptide is Large ribosomal subunit protein uL10 (Mesoplasma florum (strain ATCC 33453 / NBRC 100688 / NCTC 11704 / L1) (Acholeplasma florum)).